Reading from the N-terminus, the 624-residue chain is Chaperone protein HtpG (624 aa).

An a; substrate-binding region spans residues methionine 1–arginine 336. The interval glutamate 337–lysine 552 is b. The interval leucine 553–serine 624 is c.

It belongs to the heat shock protein 90 family. Homodimer.

The protein resides in the cytoplasm. Functionally, molecular chaperone. Has ATPase activity. The polypeptide is Chaperone protein HtpG (Shigella boydii serotype 4 (strain Sb227)).